A 335-amino-acid polypeptide reads, in one-letter code: Anthranilate phosphoribosyltransferase (335 aa).

5-phospho-alpha-D-ribose 1-diphosphate is bound by residues glycine 79, 82 to 83 (GD), serine 87, 89 to 92 (NIST), 107 to 115 (KHGNRSITS), and serine 119. Residue glycine 79 coordinates anthranilate. Mg(2+) is bound at residue serine 91. Asparagine 110 is an anthranilate binding site. Residue arginine 165 coordinates anthranilate. Aspartate 224 and glutamate 225 together coordinate Mg(2+).

This sequence belongs to the anthranilate phosphoribosyltransferase family. As to quaternary structure, homodimer. Requires Mg(2+) as cofactor.

It carries out the reaction N-(5-phospho-beta-D-ribosyl)anthranilate + diphosphate = 5-phospho-alpha-D-ribose 1-diphosphate + anthranilate. Its pathway is amino-acid biosynthesis; L-tryptophan biosynthesis; L-tryptophan from chorismate: step 2/5. In terms of biological role, catalyzes the transfer of the phosphoribosyl group of 5-phosphorylribose-1-pyrophosphate (PRPP) to anthranilate to yield N-(5'-phosphoribosyl)-anthranilate (PRA). This Lactococcus lactis subsp. cremoris (strain MG1363) protein is Anthranilate phosphoribosyltransferase.